We begin with the raw amino-acid sequence, 778 residues long: Actin-binding LIM protein 1 (778 aa).

LIM zinc-binding domains are found at residues 97-156, 156-216, 224-283, and 283-343; these read IHCH…MYGT, TRCH…MSSS, SNCA…LFGV, and VKCE…TKTE. Phosphoserine is present on serine 216. A disordered region spans residues 339–370; that stretch reads STKTEEKLRPTRTSSESIYSRPGSSIPGSPGH. Low complexity predominate over residues 360–369; it reads PGSSIPGSPG. Serine 367 is modified (phosphoserine). Phosphotyrosine is present on residues tyrosine 373 and tyrosine 396. Disordered regions lie at residues 414 to 510 and 552 to 597; these read YDDK…QAPK and AAQA…EELL. Residues serine 422, serine 426, and serine 431 each carry the phosphoserine modification. A compositionally biased stretch (polar residues) spans 423 to 434; the sequence is LGESPRTLSPTP. Threonine 433 is subject to Phosphothreonine. Phosphoserine is present on serine 435. A Phosphotyrosine modification is found at tyrosine 439. Over residues 449–474 the composition is skewed to polar residues; it reads RSTSQGSINSPVYSRHSYTPTTSRSP. 5 positions are modified to phosphoserine: serine 452, serine 455, serine 458, serine 498, and serine 587. A coiled-coil region spans residues 590-614; sequence EEDDEELLRRRQLQEEQLMKLNSGL. Residue lysine 620 forms a Glycyl lysine isopeptide (Lys-Gly) (interchain with G-Cter in SUMO2) linkage. Phosphoserine is present on residues serine 640, serine 655, serine 677, and serine 706. The region spanning 710 to 778 is the HP domain; sequence MLEPKIFPYE…NDMKKKAKLF (69 aa).

Binds F-actin. Interacts with ABRA. Detected in liver, heart, skeletal muscle, brain and retina, where it is concentrated in the inner segment and in the outer plexiform layers.

It localises to the cytoplasm. It is found in the cytoskeleton. In terms of biological role, may act as scaffold protein. May play a role in the development of the retina. Has been suggested to play a role in axon guidance. This chain is Actin-binding LIM protein 1 (ABLIM1), found in Homo sapiens (Human).